A 146-amino-acid polypeptide reads, in one-letter code: Large ribosomal subunit protein uL22 (146 aa).

Positions 1–39 (MAETQTTTPKKKAERRAPPPARARKNRPAAPAPGPHASL) are disordered.

It belongs to the universal ribosomal protein uL22 family. Part of the 50S ribosomal subunit.

This protein binds specifically to 23S rRNA; its binding is stimulated by other ribosomal proteins, e.g. L4, L17, and L20. It is important during the early stages of 50S assembly. It makes multiple contacts with different domains of the 23S rRNA in the assembled 50S subunit and ribosome. In terms of biological role, the globular domain of the protein is located near the polypeptide exit tunnel on the outside of the subunit, while an extended beta-hairpin is found that lines the wall of the exit tunnel in the center of the 70S ribosome. The protein is Large ribosomal subunit protein uL22 of Anaeromyxobacter dehalogenans (strain 2CP-1 / ATCC BAA-258).